Reading from the N-terminus, the 462-residue chain is GTPase Der (462 aa).

EngA-type G domains are found at residues 9–171 (KTIA…NLNQ) and 201–372 (IQVG…ECFS). GTP contacts are provided by residues 15-22 (GQPNVGKS), 62-66 (DTGGM), 123-126 (NKID), 207-214 (GRVNVGKS), 254-258 (DTAGI), and 318-321 (NKWD). Positions 373 to 457 (KRIPTSLLNS…PLILNAKDKK (85 aa)) constitute a KH-like domain.

It belongs to the TRAFAC class TrmE-Era-EngA-EngB-Septin-like GTPase superfamily. EngA (Der) GTPase family. Associates with the 50S ribosomal subunit.

Functionally, GTPase that plays an essential role in the late steps of ribosome biogenesis. The polypeptide is GTPase Der (Helicobacter pylori (strain P12)).